The sequence spans 314 residues: Protoheme IX farnesyltransferase 2 (314 aa).

Helical transmembrane passes span 32-49 (VMSLVVFTAFVGLVAAPV), 54-76 (LLAVIAILSIAIGAGASGALNMW), 98-118 (IQPHEALSFGLVLSVLSVMTL), 120-140 (VLVNWLSATLLAFTIFFYAVV), 153-173 (IVIGGAAGAIPPVIGWAAVTG), 180-200 (IVLFLIIFLWTPPHFWALALF), 226-246 (IFAYALVLAPVGVAPWLLGYT), 249-269 (FYGVAAMLLGLGFVWYAWKVL), and 285-305 (FAYSLLYLFAIFAAYLADSVV).

The protein belongs to the UbiA prenyltransferase family. Protoheme IX farnesyltransferase subfamily.

The protein resides in the cell inner membrane. It carries out the reaction heme b + (2E,6E)-farnesyl diphosphate + H2O = Fe(II)-heme o + diphosphate. It participates in porphyrin-containing compound metabolism; heme O biosynthesis; heme O from protoheme: step 1/1. Its function is as follows. Converts heme B (protoheme IX) to heme O by substitution of the vinyl group on carbon 2 of heme B porphyrin ring with a hydroxyethyl farnesyl side group. This chain is Protoheme IX farnesyltransferase 2, found in Mesorhizobium japonicum (strain LMG 29417 / CECT 9101 / MAFF 303099) (Mesorhizobium loti (strain MAFF 303099)).